Consider the following 463-residue polypeptide: Glycine--tRNA ligase (463 aa).

Arginine 102 contacts substrate. Positions 113 to 134 (KHGHPPPNGLADIRDPDTGEPG) are disordered. Glutamate 165 provides a ligand contact to substrate. ATP-binding positions include 197-199 (RNE), 207-212 (FRTREF), 284-285 (EL), and 328-331 (GLTR). Substrate is bound at residue 212–216 (FEQME). 324–328 (EPAAG) contacts substrate.

It belongs to the class-II aminoacyl-tRNA synthetase family. Homodimer.

The protein localises to the cytoplasm. It catalyses the reaction tRNA(Gly) + glycine + ATP = glycyl-tRNA(Gly) + AMP + diphosphate. In terms of biological role, catalyzes the attachment of glycine to tRNA(Gly). The chain is Glycine--tRNA ligase from Mycolicibacterium paratuberculosis (strain ATCC BAA-968 / K-10) (Mycobacterium paratuberculosis).